The sequence spans 727 residues: Glucans biosynthesis glucosyltransferase H (727 aa).

Residues 17-41 are disordered; that stretch reads GSAMPNERPGPMEPQSLSQMPEGFP. 6 helical membrane passes run 58–80, 95–117, 407–429, 457–479, 499–521, and 572–594; these read FFVV…AVFS, FAIN…LLLL, GIMA…MLAL, ALRL…VLLL, VLFE…CGAV, and LLAW…AWTG.

Belongs to the glycosyltransferase 2 family. OpgH subfamily.

It is found in the cell inner membrane. Its pathway is glycan metabolism; osmoregulated periplasmic glucan (OPG) biosynthesis. In terms of biological role, involved in the biosynthesis of osmoregulated periplasmic glucans (OPGs). The protein is Glucans biosynthesis glucosyltransferase H of Shewanella oneidensis (strain ATCC 700550 / JCM 31522 / CIP 106686 / LMG 19005 / NCIMB 14063 / MR-1).